The primary structure comprises 96 residues: Redox-responsive transcriptional regulator WhiB3 (96 aa).

The 4Fe-4S Wbl-type domain occupies 22-86; that stretch reads LCRGVDSSMF…GGLSESEREL (65 aa). [4Fe-4S] cluster contacts are provided by C23, C53, C56, and C62.

The protein belongs to the WhiB family. Requires [4Fe-4S] cluster as cofactor. The Fe-S cluster can be nitrosylated by nitric oxide (NO). In terms of processing, upon Fe-S cluster removal intramolecular disulfide bonds are formed.

It is found in the cytoplasm. Its function is as follows. A redox-sensitive transcriptional regulator. Maintains intracellular redox homeostasis by regulating catabolic metabolism and polyketide biosynthesis. Regulates expression of the redox buffer ergothioneine (ERG). In concert with myothiol (MSH), another redox buffer, responds to low pH leading to acid resistance. The apo- but not holo-form probably binds DNA. This Mycolicibacterium smegmatis (strain ATCC 700084 / mc(2)155) (Mycobacterium smegmatis) protein is Redox-responsive transcriptional regulator WhiB3 (whiB3).